A 79-amino-acid chain; its full sequence is Large ribosomal subunit protein uL29 (79 aa).

It belongs to the universal ribosomal protein uL29 family.

This Tropheryma whipplei (strain Twist) (Whipple's bacillus) protein is Large ribosomal subunit protein uL29.